A 69-amino-acid chain; its full sequence is Calcium-binding protein (69 aa).

EF-hand domains lie at 2 to 37 (VNRTEAAQLLKHLDRDKSGKISSQELMEFLHTVNCP) and 38 to 69 (FKKEQVEKFIKQHDKDGDGQLNTDELLDVLCS). Positions 15, 17, 19, 21, 26, 51, 53, 55, 57, and 62 each coordinate Ca(2+).

The chain is Calcium-binding protein from Schistosoma mansoni (Blood fluke).